We begin with the raw amino-acid sequence, 833 residues long: Patatin-like phospholipase domain-containing protein SNOG_00918 (833 aa).

2 disordered regions span residues methionine 1–aspartate 20 and histidine 49–asparagine 71. A helical membrane pass occupies residues tryptophan 108–threonine 128. The PNPLA domain occupies leucine 301–asparagine 457. The GXSXG motif lies at glycine 332–glycine 336. Serine 334 functions as the Nucleophile in the catalytic mechanism. The Proton acceptor role is filled by aspartate 444. Disordered regions lie at residues threonine 630 to proline 657 and leucine 680 to leucine 833. The span at serine 644–serine 655 shows a compositional bias: low complexity. Positions aspartate 689 to lysine 707 are enriched in polar residues. Basic and acidic residues-rich tracts occupy residues arginine 740–alanine 750, arginine 759–arginine 769, and aspartate 782–valine 794. Over residues glutamate 809–glutamate 819 the composition is skewed to acidic residues.

It belongs to the PLPL family.

The protein localises to the membrane. In terms of biological role, probable lipid hydrolase. This Phaeosphaeria nodorum (strain SN15 / ATCC MYA-4574 / FGSC 10173) (Glume blotch fungus) protein is Patatin-like phospholipase domain-containing protein SNOG_00918.